The following is a 248-amino-acid chain: tRNA pseudouridine synthase A (248 aa).

Catalysis depends on Asp53, which acts as the Nucleophile. Residue Tyr111 participates in substrate binding.

The protein belongs to the tRNA pseudouridine synthase TruA family. In terms of assembly, homodimer.

The enzyme catalyses uridine(38/39/40) in tRNA = pseudouridine(38/39/40) in tRNA. Functionally, formation of pseudouridine at positions 38, 39 and 40 in the anticodon stem and loop of transfer RNAs. The polypeptide is tRNA pseudouridine synthase A (Streptococcus thermophilus (strain ATCC BAA-491 / LMD-9)).